We begin with the raw amino-acid sequence, 632 residues long: tRNA uridine 5-carboxymethylaminomethyl modification enzyme MnmG (632 aa).

FAD contacts are provided by residues 13–18, Val125, and Ser180; that span reads GGGHAG. Residue 273–287 coordinates NAD(+); that stretch reads GPRYCPSIEDKVMRF. Gln370 provides a ligand contact to FAD.

It belongs to the MnmG family. In terms of assembly, homodimer. Heterotetramer of two MnmE and two MnmG subunits. FAD is required as a cofactor.

It is found in the cytoplasm. Functionally, NAD-binding protein involved in the addition of a carboxymethylaminomethyl (cmnm) group at the wobble position (U34) of certain tRNAs, forming tRNA-cmnm(5)s(2)U34. This is tRNA uridine 5-carboxymethylaminomethyl modification enzyme MnmG from Vibrio vulnificus (strain YJ016).